The chain runs to 417 residues: Tyrosine--tRNA ligase (417 aa).

Residue Y39 coordinates L-tyrosine. The short motif at 44-53 is the 'HIGH' region element; it reads CTARSLHIGN. Residues Y176 and Q180 each contribute to the L-tyrosine site. Positions 236-240 match the 'KMSKS' region motif; it reads KMGKT. K239 lines the ATP pocket. In terms of domain architecture, S4 RNA-binding spans 350 to 417; sequence FGVLNAFVKA…KKKHILIKPA (68 aa).

The protein belongs to the class-I aminoacyl-tRNA synthetase family. TyrS type 1 subfamily. Homodimer.

Its subcellular location is the cytoplasm. It carries out the reaction tRNA(Tyr) + L-tyrosine + ATP = L-tyrosyl-tRNA(Tyr) + AMP + diphosphate + H(+). In terms of biological role, catalyzes the attachment of tyrosine to tRNA(Tyr) in a two-step reaction: tyrosine is first activated by ATP to form Tyr-AMP and then transferred to the acceptor end of tRNA(Tyr). The protein is Tyrosine--tRNA ligase of Bradyrhizobium diazoefficiens (strain JCM 10833 / BCRC 13528 / IAM 13628 / NBRC 14792 / USDA 110).